A 240-amino-acid chain; its full sequence is Uridylate kinase (240 aa).

13–16 contacts ATP; that stretch reads KASG. The involved in allosteric activation by GTP stretch occupies residues 21 to 26; that stretch reads GSQGFG. Glycine 55 lines the UMP pocket. Glycine 56 and arginine 60 together coordinate ATP. UMP-binding positions include aspartate 75 and 136-143; that span reads TGNPFFTT. The ATP site is built by threonine 163, glutamine 164, tyrosine 169, and aspartate 172.

It belongs to the UMP kinase family. In terms of assembly, homohexamer.

It is found in the cytoplasm. It carries out the reaction UMP + ATP = UDP + ADP. It participates in pyrimidine metabolism; CTP biosynthesis via de novo pathway; UDP from UMP (UMPK route): step 1/1. With respect to regulation, allosterically activated by GTP. Inhibited by UTP. Its function is as follows. Catalyzes the reversible phosphorylation of UMP to UDP. The protein is Uridylate kinase of Brucella abortus biovar 1 (strain 9-941).